The following is a 56-amino-acid chain: Large ribosomal subunit protein eL37 (56 aa).

Residues C19, C22, C34, and C37 each coordinate Zn(2+). A C4-type zinc finger spans residues 19–37; the sequence is CRRCGRLSYNFNRKTCVAC.

The protein belongs to the eukaryotic ribosomal protein eL37 family. Requires Zn(2+) as cofactor.

Binds to the 23S rRNA. The chain is Large ribosomal subunit protein eL37 from Methanothrix thermoacetophila (strain DSM 6194 / JCM 14653 / NBRC 101360 / PT) (Methanosaeta thermophila).